Here is a 337-residue protein sequence, read N- to C-terminus: HTH-type transcriptional repressor PurR (337 aa).

The HTH lacI-type domain maps to 2–56; the sequence is ATIKDVAKLAAVSTTTVSHVINKTRFVAEATQKRVWEAVEELNYAPSAVARSLKC. A DNA-binding region (H-T-H motif) is located at residues 4-23; the sequence is IKDVAKLAAVSTTTVSHVIN. A DNA-binding region spans residues 48 to 56; it reads SAVARSLKC. Positions 73, 189, 191, 220, and 276 each coordinate hypoxanthine.

In terms of assembly, homodimer.

The protein operates within purine metabolism; purine nucleotide biosynthesis [regulation]. In terms of biological role, is the main repressor of the genes involved in the de novo synthesis of purine nucleotides, regulating purB, purC, purEK, purF, purHD, purL, purMN and guaBA expression. PurR is allosterically activated to bind its cognate DNA by binding the purine corepressors, hypoxanthine or guanine, thereby effecting transcription repression. This chain is HTH-type transcriptional repressor PurR, found in Aliivibrio fischeri (strain MJ11) (Vibrio fischeri).